Consider the following 354-residue polypeptide: NADH-quinone oxidoreductase subunit H (354 aa).

The next 8 membrane-spanning stretches (helical) occupy residues 22–42 (ILIR…YLIL), 91–111 (YLIA…VIPF), 124–144 (LLYV…AGWA), 168–188 (MGFA…SAIV), 203–223 (ILSW…ISGV), 255–275 (LFFL…ALMF), 291–311 (IPGF…FIWI), and 326–346 (LGWK…AIWI).

This sequence belongs to the complex I subunit 1 family. NDH-1 is composed of 14 different subunits. Subunits NuoA, H, J, K, L, M, N constitute the membrane sector of the complex.

It localises to the cell inner membrane. It catalyses the reaction a quinone + NADH + 5 H(+)(in) = a quinol + NAD(+) + 4 H(+)(out). In terms of biological role, NDH-1 shuttles electrons from NADH, via FMN and iron-sulfur (Fe-S) centers, to quinones in the respiratory chain. The immediate electron acceptor for the enzyme in this species is believed to be ubiquinone. Couples the redox reaction to proton translocation (for every two electrons transferred, four hydrogen ions are translocated across the cytoplasmic membrane), and thus conserves the redox energy in a proton gradient. This subunit may bind ubiquinone. The chain is NADH-quinone oxidoreductase subunit H from Cupriavidus necator (strain ATCC 17699 / DSM 428 / KCTC 22496 / NCIMB 10442 / H16 / Stanier 337) (Ralstonia eutropha).